The sequence spans 110 residues: Movement protein TGB2 (110 aa).

At 1–10 (MSGAHHLTPP) the chain is on the cytoplasmic side. A helical transmembrane segment spans residues 11-34 (TDYGKPVLAASIGISLALLVYTAT). The Lumenal segment spans residues 35–76 (RSTLPHVGDNLHALPHGGRYVDGTKSISYFSPSASKTRDPFP). A helical membrane pass occupies residues 77-92 (FAFLLILTLSGLILLL). Residues 93-110 (SRRRSNPHSCPSCGTPHA) lie on the Cytoplasmic side of the membrane.

This sequence belongs to the Tymovirales TGBp2 protein family.

It is found in the host endoplasmic reticulum membrane. Plays a role in viral cell-to-cell propagation, by facilitating genome transport to neighboring plant cells through plasmosdesmata,. The polypeptide is Movement protein TGB2 (Plantago asiatica (P1AMV)).